Consider the following 292-residue polypeptide: UDP-N-acetylenolpyruvoylglucosamine reductase (292 aa).

The FAD-binding PCMH-type domain maps to 27–188 (KIGGPVRLFI…LRVGFRIIKG (162 aa)). Residue Arg166 is part of the active site. The Proton donor role is filled by Ser217. Glu288 is an active-site residue.

It belongs to the MurB family. FAD serves as cofactor.

The protein resides in the cytoplasm. It carries out the reaction UDP-N-acetyl-alpha-D-muramate + NADP(+) = UDP-N-acetyl-3-O-(1-carboxyvinyl)-alpha-D-glucosamine + NADPH + H(+). Its pathway is cell wall biogenesis; peptidoglycan biosynthesis. Cell wall formation. The sequence is that of UDP-N-acetylenolpyruvoylglucosamine reductase from Thermosipho melanesiensis (strain DSM 12029 / CIP 104789 / BI429).